A 90-amino-acid chain; its full sequence is uncharacterized protein (90 aa).

This is an uncharacterized protein from Treponema pallidum (strain Nichols).